The primary structure comprises 183 residues: Ubiquitin-conjugating enzyme E2-21 kDa (183 aa).

In terms of domain architecture, UBC core spans threonine 17 to arginine 179. Cysteine 115 (glycyl thioester intermediate) is an active-site residue.

This sequence belongs to the ubiquitin-conjugating enzyme family.

Its subcellular location is the peroxisome. The enzyme catalyses S-ubiquitinyl-[E1 ubiquitin-activating enzyme]-L-cysteine + [E2 ubiquitin-conjugating enzyme]-L-cysteine = [E1 ubiquitin-activating enzyme]-L-cysteine + S-ubiquitinyl-[E2 ubiquitin-conjugating enzyme]-L-cysteine.. It functions in the pathway protein modification; protein ubiquitination. In terms of biological role, catalyzes the covalent attachment of ubiquitin to other proteins. Essential for peroxisome biogenesis. Required for UBC4-independent ubiquitination of PEX5. The chain is Ubiquitin-conjugating enzyme E2-21 kDa (PEX4) from Saccharomyces cerevisiae (strain ATCC 204508 / S288c) (Baker's yeast).